The following is a 625-amino-acid chain: MTFNYDVIVVGAGHAGCEAAAAAANLGSKTLLITMDMNKIAQMSCNPAVGGIAKGQIVREIDALGGYMGIVTDQTAIQFRMLNRSKGPAMWSPRAQSDRARFIDCWRGILENMPNLSIWQDMVQELIIEHGQVCGVRTGMNVVFRAGAVVLTNGTFLNGLLHIGRTQIRGGRIAEPAATGLTEQLISLGIQTDRMKTGTPVRIDGRSVHFDEMEEQPGENDFHKFSYMDTSHRKLKQLSCWTTFTNEACHDILREGLPDSPLYNGQIKSIGPRYCPSIETKIVTFADKTQHQLFLEPEGEATQEYYLNGFSSSLPLDIQLRALQAIPAFRDVQIYRPGYAIEYDFFDPTQLRHNLETKQIRNLFFAGQINGTTGYEEAGGQGLVAGINAHINCHGGQPFILGRDEAYIGVLIDDLVTKGVDEPYRMFTSRAEYRILLRQDDADMRLTEKSYQMGLAKQDRYDLLREKKESRDAIIRFAETYSVKPQYINSGLEKLGTAPLSHGCKLFDVVLRPQTTLENLADLVPALRAELDKVPASRKEEIIEAAEILIKYSGYIKREQIIADKINRLENIRIKGKFDYNSIQSLSTEARQKLTRIDPDTIAQASRIPGISPSDINILLVLLGR.

11–16 (GAGHAG) is a binding site for FAD. An NAD(+)-binding site is contributed by 271–285 (GPRYCPSIETKIVTF).

It belongs to the MnmG family. In terms of assembly, homodimer. Heterotetramer of two MnmE and two MnmG subunits. Requires FAD as cofactor.

The protein localises to the cytoplasm. Functionally, NAD-binding protein involved in the addition of a carboxymethylaminomethyl (cmnm) group at the wobble position (U34) of certain tRNAs, forming tRNA-cmnm(5)s(2)U34. This is tRNA uridine 5-carboxymethylaminomethyl modification enzyme MnmG from Parabacteroides distasonis (strain ATCC 8503 / DSM 20701 / CIP 104284 / JCM 5825 / NCTC 11152).